A 583-amino-acid polypeptide reads, in one-letter code: Aspartate--tRNA(Asp/Asn) ligase (583 aa).

Position 171 (Glu-171) interacts with L-aspartate. Residues 195–198 form an aspartate region; that stretch reads QLFK. Arg-217 serves as a coordination point for L-aspartate. Residues 217 to 219 and Gln-226 contribute to the ATP site; that span reads RDE. L-aspartate is bound at residue His-443. Residue Glu-476 participates in ATP binding. L-aspartate is bound at residue Arg-483. 528 to 531 is an ATP binding site; sequence GLDR.

It belongs to the class-II aminoacyl-tRNA synthetase family. Type 1 subfamily. Homodimer.

It localises to the cytoplasm. It carries out the reaction tRNA(Asx) + L-aspartate + ATP = L-aspartyl-tRNA(Asx) + AMP + diphosphate. Functionally, aspartyl-tRNA synthetase with relaxed tRNA specificity since it is able to aspartylate not only its cognate tRNA(Asp) but also tRNA(Asn). Reaction proceeds in two steps: L-aspartate is first activated by ATP to form Asp-AMP and then transferred to the acceptor end of tRNA(Asp/Asn). The sequence is that of Aspartate--tRNA(Asp/Asn) ligase from Ruthia magnifica subsp. Calyptogena magnifica.